Consider the following 393-residue polypeptide: Riboflavin biosynthesis protein RibBA (393 aa).

The segment at 1–200 (MEFDEIKDAL…IESLVNYQKD (200 aa)) is DHBP synthase. D-ribulose 5-phosphate-binding positions include 27 to 28 (RE), Asp-32, 139 to 143 (RTGHT), and Glu-163. Residue Glu-28 participates in Mg(2+) binding. His-142 is a binding site for Mg(2+). The GTP cyclohydrolase II stretch occupies residues 201-393 (KDTSVELKAK…TKKIKMGHLI (193 aa)). 249 to 253 (RIHSA) lines the GTP pocket. Zn(2+) contacts are provided by Cys-254, Cys-265, and Cys-267. GTP-binding positions include Gln-270, 291–293 (EGR), and Thr-313. Asp-325 acts as the Proton acceptor; for GTP cyclohydrolase activity in catalysis. The active-site Nucleophile; for GTP cyclohydrolase activity is the Arg-327. GTP contacts are provided by Ser-348 and Lys-353.

This sequence in the N-terminal section; belongs to the DHBP synthase family. It in the C-terminal section; belongs to the GTP cyclohydrolase II family. The cofactor is Mg(2+). Mn(2+) serves as cofactor. It depends on Zn(2+) as a cofactor.

It carries out the reaction D-ribulose 5-phosphate = (2S)-2-hydroxy-3-oxobutyl phosphate + formate + H(+). The enzyme catalyses GTP + 4 H2O = 2,5-diamino-6-hydroxy-4-(5-phosphoribosylamino)-pyrimidine + formate + 2 phosphate + 3 H(+). Its pathway is cofactor biosynthesis; riboflavin biosynthesis; 2-hydroxy-3-oxobutyl phosphate from D-ribulose 5-phosphate: step 1/1. It participates in cofactor biosynthesis; riboflavin biosynthesis; 5-amino-6-(D-ribitylamino)uracil from GTP: step 1/4. Functionally, catalyzes the conversion of D-ribulose 5-phosphate to formate and 3,4-dihydroxy-2-butanone 4-phosphate. Catalyzes the conversion of GTP to 2,5-diamino-6-ribosylamino-4(3H)-pyrimidinone 5'-phosphate (DARP), formate and pyrophosphate. The chain is Riboflavin biosynthesis protein RibBA from Staphylococcus haemolyticus (strain JCSC1435).